The primary structure comprises 137 residues: Small heat shock protein IbpA (137 aa).

One can recognise a sHSP domain in the interval 28-137; it reads SQSNGGYPPY…ANKPRRIEIN (110 aa).

It belongs to the small heat shock protein (HSP20) family. In terms of assembly, monomer. Forms homomultimers of about 100-150 subunits at optimal growth temperatures. Conformation changes to monomers at high temperatures or high ionic concentrations.

It is found in the cytoplasm. In terms of biological role, associates with aggregated proteins, together with IbpB, to stabilize and protect them from irreversible denaturation and extensive proteolysis during heat shock and oxidative stress. Aggregated proteins bound to the IbpAB complex are more efficiently refolded and reactivated by the ATP-dependent chaperone systems ClpB and DnaK/DnaJ/GrpE. Its activity is ATP-independent. The sequence is that of Small heat shock protein IbpA from Citrobacter koseri (strain ATCC BAA-895 / CDC 4225-83 / SGSC4696).